We begin with the raw amino-acid sequence, 598 residues long: Transcription factor dpl-1 (598 aa).

Disordered regions lie at residues 1-73, 435-457, and 573-598; these read MNPT…PTGL, NRPYSTVPPDRRLSTGATSVNSG, and TEQPMTSAQAAALIQHPQPEEYDYFQ. Polar residues predominate over residues 13-22; the sequence is PAQSRPQVSL. The segment covering 55 to 64 has biased composition (gly residues); sequence GVGGSSGAGG.

It belongs to the E2F/DP family. Component of the DRM complex, at least composed of lin-9, lin-35, lin-37, lin-52, lin-53, lin-54- dpl-1 and efl-1. Interacts (via N-terminus) with efl-1. Interacts (via C-terminus) with lin-35 (via C-terminus).

The protein resides in the nucleus. Synthetic multivulva class B (synMuvB) protein. SynMuvB proteins are required to repress the induction of vulval development by Ras signaling and probably act by forming the multiprotein DRM complex that represses transcription. May also negatively regulate vulval development in association with other SynMuv class B proteins such as lin-15A. Can stimulate E2F-dependent transcription. Plays a role in negatively regulating the progression through the G1 phase of the cell cycle during postembryonic development, most likely by acting as a transcriptional repressor in association with the cell cycle regulatory factor efl-1 and the transcriptional repressor lin-35, but may also act as a positive regulator of cell cycle entry. Involved in the regulation of intestinal cell division during postembryonic development, most likely in complex with efl-1 and lin-35. Promotes germ cell programmed cell death, probably together with efl-1, by positively regulating the expression of the apoptosis proteins ced-3 and ced-4. In particular, positively regulates the expression of ced-4 in response to starvation. Its role in programmed cell death may be in conjunction with cell cycle regulatory factor efl-1 and the synthetic multivulva class B proteins lin-35, lin-37 and lin-52, and is independent of the ced-1, ced-8 and ced-9 pathways. The polypeptide is Transcription factor dpl-1 (Caenorhabditis elegans).